The chain runs to 527 residues: Peptide chain release factor 3 (527 aa).

The tr-type G domain maps to 9–278; sequence DIRRTFAIIS…GLTQWAPKPQ (270 aa). GTP-binding positions include 18-25, 86-90, and 140-143; these read SHPDAGKT, DTPGH, and NKCD.

The protein belongs to the TRAFAC class translation factor GTPase superfamily. Classic translation factor GTPase family. PrfC subfamily.

The protein resides in the cytoplasm. Increases the formation of ribosomal termination complexes and stimulates activities of RF-1 and RF-2. It binds guanine nucleotides and has strong preference for UGA stop codons. It may interact directly with the ribosome. The stimulation of RF-1 and RF-2 is significantly reduced by GTP and GDP, but not by GMP. This is Peptide chain release factor 3 from Shewanella denitrificans (strain OS217 / ATCC BAA-1090 / DSM 15013).